The sequence spans 384 residues: Galactokinase (384 aa).

E34 to D37 is a substrate binding site. S123–S129 lines the ATP pocket. S129 and E161 together coordinate Mg(2+). Residue D173 is the Proton acceptor of the active site. Y222 is a binding site for substrate.

Belongs to the GHMP kinase family. GalK subfamily.

It is found in the cytoplasm. The catalysed reaction is alpha-D-galactose + ATP = alpha-D-galactose 1-phosphate + ADP + H(+). It functions in the pathway carbohydrate metabolism; galactose metabolism. Functionally, catalyzes the transfer of the gamma-phosphate of ATP to D-galactose to form alpha-D-galactose-1-phosphate (Gal-1-P). The sequence is that of Galactokinase from Actinobacillus pleuropneumoniae serotype 5b (strain L20).